We begin with the raw amino-acid sequence, 426 residues long: Phosphomethylpyrimidine synthase (426 aa).

Substrate contacts are provided by residues Asn65, Met94, Tyr123, His162, 184–186, 225–228, and Glu264; these read SRG and DGMR. Zn(2+) is bound at residue His268. Tyr291 is a substrate binding site. His332 is a binding site for Zn(2+). Positions 408, 411, and 415 each coordinate [4Fe-4S] cluster.

The protein belongs to the ThiC family. [4Fe-4S] cluster is required as a cofactor.

The catalysed reaction is 5-amino-1-(5-phospho-beta-D-ribosyl)imidazole + S-adenosyl-L-methionine = 4-amino-2-methyl-5-(phosphooxymethyl)pyrimidine + CO + 5'-deoxyadenosine + formate + L-methionine + 3 H(+). Its pathway is cofactor biosynthesis; thiamine diphosphate biosynthesis. Catalyzes the synthesis of the hydroxymethylpyrimidine phosphate (HMP-P) moiety of thiamine from aminoimidazole ribotide (AIR) in a radical S-adenosyl-L-methionine (SAM)-dependent reaction. This is Phosphomethylpyrimidine synthase from Methanococcus maripaludis (strain C7 / ATCC BAA-1331).